A 162-amino-acid chain; its full sequence is Selenoprotein F (162 aa).

A signal peptide spans 1–28 (MAAGQGGWLRPALGLRLLLATAFQAVSA). Residue U93 is a non-standard amino acid, selenocysteine.

The protein belongs to the selenoprotein M/F family. As to quaternary structure, forms a tight complex with UGGT1/UGCGL1. Interacts with UGGT2/UGCGL2. Interacts with RDH11.

It localises to the endoplasmic reticulum lumen. In terms of biological role, may be involved in redox reactions associated with the formation of disulfide bonds. May contribute to the quality control of protein folding in the endoplasmic reticulum. May regulate protein folding by enhancing the catalytic activity of UGGT1/UGCGL1 and UGGT2/UGCGL2. The sequence is that of Selenoprotein F from Mus musculus (Mouse).